Consider the following 318-residue polypeptide: Transaldolase (318 aa).

The Schiff-base intermediate with substrate role is filled by Lys-132.

Belongs to the transaldolase family. Type 1 subfamily. In terms of assembly, homodimer.

The protein localises to the cytoplasm. The enzyme catalyses D-sedoheptulose 7-phosphate + D-glyceraldehyde 3-phosphate = D-erythrose 4-phosphate + beta-D-fructose 6-phosphate. It functions in the pathway carbohydrate degradation; pentose phosphate pathway; D-glyceraldehyde 3-phosphate and beta-D-fructose 6-phosphate from D-ribose 5-phosphate and D-xylulose 5-phosphate (non-oxidative stage): step 2/3. Transaldolase is important for the balance of metabolites in the pentose-phosphate pathway. The polypeptide is Transaldolase (Shewanella baltica (strain OS223)).